Consider the following 238-residue polypeptide: Major prion protein (238 aa).

The first 15 residues, 1-15, serve as a signal peptide directing secretion; it reads MLVLFVATWSDLGLC. Residues 16–215 are interaction with GRB2, ERI3 and SYN1; it reads KKRPKPGGWN…ESQAYYQRGS (200 aa). The segment at 18 to 93 is disordered; that stretch reads RPKPGGWNTG…WHKPSKPKTS (76 aa). Repeat copies occupy residues 44–52, 53–60, 61–68, and 69–76. The tract at residues 44–76 is 4 X 8 AA tandem repeats of P-H-G-G-G-W-G-Q; that stretch reads PQGGGGWGQPHGGGWGQPHGGGWGQPHGGGWGQ. Over residues 45–80 the composition is skewed to gly residues; that stretch reads QGGGGWGQPHGGGWGQPHGGGWGQPHGGGWGQGGGT. Residues Gly47, Gly48, His54, Gly55, Gly56, His62, Gly63, Gly64, His70, Gly71, and Gly72 each contribute to the Cu(2+) site. The span at 83–93 shows a compositional bias: basic residues; that stretch reads QWHKPSKPKTS. Cys164 and Cys199 are joined by a disulfide. N-linked (GlcNAc...) asparagine glycosylation is found at Asn166 and Asn182. Residue Ser215 is the site of GPI-anchor amidated serine attachment. The propeptide at 216 to 238 is removed in mature form; it reads SMVLFSSPPVILLISFLIFLIVG.

It belongs to the prion family. Monomer and homodimer. Has a tendency to aggregate into amyloid fibrils containing a cross-beta spine, formed by a steric zipper of superposed beta-strands. Soluble oligomers may represent an intermediate stage on the path to fibril formation. Copper binding may promote oligomerization. Interacts with GRB2, APP, ERI3/PRNPIP and SYN1. Mislocalized cytosolically exposed PrP interacts with MGRN1; this interaction alters MGRN1 subcellular location and causes lysosomal enlargement. Interacts with KIAA1191.

It localises to the cell membrane. Its subcellular location is the golgi apparatus. In terms of biological role, its primary physiological function is unclear. Has cytoprotective activity against internal or environmental stresses. May play a role in neuronal development and synaptic plasticity. May be required for neuronal myelin sheath maintenance. May play a role in iron uptake and iron homeostasis. Soluble oligomers are toxic to cultured neuroblastoma cells and induce apoptosis (in vitro). Association with GPC1 (via its heparan sulfate chains) targets PRNP to lipid rafts. Also provides Cu(2+) or Zn(2+) for the ascorbate-mediated GPC1 deaminase degradation of its heparan sulfate side chains. The chain is Major prion protein (PRNP) from Macaca sylvanus (Barbary macaque).